Reading from the N-terminus, the 332-residue chain is Formamidase (332 aa).

The CN hydrolase domain maps to 14–259; it reads FLTALIQYPV…WEIVTAEVYP (246 aa). Glu-60 functions as the Proton acceptor in the catalytic mechanism. Lys-132 serves as the catalytic Proton donor. The active-site Nucleophile is the Cys-165.

The protein belongs to the carbon-nitrogen hydrolase superfamily. Aliphatic amidase family.

It catalyses the reaction formamide + H2O = formate + NH4(+). In terms of biological role, is an aliphatic amidase with a restricted substrate specificity, as it only hydrolyzes formamide. The protein is Formamidase of Bacillus cereus (strain B4264).